Consider the following 119-residue polypeptide: Beta-2-microglobulin (119 aa).

A signal peptide spans 1-20 (MGRFVAVALLVLLSLSGLET). In terms of domain architecture, Ig-like C1-type spans 25–114 (PKIQVYSRHP…VTFSTPKTVK (90 aa)). Cys45 and Cys100 are disulfide-bonded.

Belongs to the beta-2-microglobulin family. As to quaternary structure, heterodimer of an alpha chain and a beta chain. Beta-2-microglobulin is the beta-chain of major histocompatibility complex class I molecules.

It localises to the secreted. Functionally, component of the class I major histocompatibility complex (MHC). Involved in the presentation of peptide antigens to the immune system. The chain is Beta-2-microglobulin (B2M) from Callicebus personatus nigrifrons (Black-fronted titi).